The primary structure comprises 288 residues: Elongation factor Ts (288 aa).

The tract at residues 82 to 85 (TDFV) is involved in Mg(2+) ion dislocation from EF-Tu.

Belongs to the EF-Ts family.

Its subcellular location is the cytoplasm. Its function is as follows. Associates with the EF-Tu.GDP complex and induces the exchange of GDP to GTP. It remains bound to the aminoacyl-tRNA.EF-Tu.GTP complex up to the GTP hydrolysis stage on the ribosome. The chain is Elongation factor Ts from Chlorobium limicola (strain DSM 245 / NBRC 103803 / 6330).